A 295-amino-acid chain; its full sequence is Bifunctional protein FolD (295 aa).

NADP(+) is bound by residues glycine 166–serine 168, threonine 195, and valine 236.

It belongs to the tetrahydrofolate dehydrogenase/cyclohydrolase family. As to quaternary structure, homodimer.

The enzyme catalyses (6R)-5,10-methylene-5,6,7,8-tetrahydrofolate + NADP(+) = (6R)-5,10-methenyltetrahydrofolate + NADPH. It catalyses the reaction (6R)-5,10-methenyltetrahydrofolate + H2O = (6R)-10-formyltetrahydrofolate + H(+). It participates in one-carbon metabolism; tetrahydrofolate interconversion. In terms of biological role, catalyzes the oxidation of 5,10-methylenetetrahydrofolate to 5,10-methenyltetrahydrofolate and then the hydrolysis of 5,10-methenyltetrahydrofolate to 10-formyltetrahydrofolate. The polypeptide is Bifunctional protein FolD (Syntrophobacter fumaroxidans (strain DSM 10017 / MPOB)).